A 223-amino-acid polypeptide reads, in one-letter code: Phosphoribosylformylglycinamidine synthase subunit PurQ (223 aa).

Residues K4 to A223 enclose the Glutamine amidotransferase type-1 domain. C87 (nucleophile) is an active-site residue. Catalysis depends on residues H195 and E197.

As to quaternary structure, part of the FGAM synthase complex composed of 1 PurL, 1 PurQ and 2 PurS subunits.

The protein resides in the cytoplasm. The catalysed reaction is N(2)-formyl-N(1)-(5-phospho-beta-D-ribosyl)glycinamide + L-glutamine + ATP + H2O = 2-formamido-N(1)-(5-O-phospho-beta-D-ribosyl)acetamidine + L-glutamate + ADP + phosphate + H(+). The enzyme catalyses L-glutamine + H2O = L-glutamate + NH4(+). It functions in the pathway purine metabolism; IMP biosynthesis via de novo pathway; 5-amino-1-(5-phospho-D-ribosyl)imidazole from N(2)-formyl-N(1)-(5-phospho-D-ribosyl)glycinamide: step 1/2. Functionally, part of the phosphoribosylformylglycinamidine synthase complex involved in the purines biosynthetic pathway. Catalyzes the ATP-dependent conversion of formylglycinamide ribonucleotide (FGAR) and glutamine to yield formylglycinamidine ribonucleotide (FGAM) and glutamate. The FGAM synthase complex is composed of three subunits. PurQ produces an ammonia molecule by converting glutamine to glutamate. PurL transfers the ammonia molecule to FGAR to form FGAM in an ATP-dependent manner. PurS interacts with PurQ and PurL and is thought to assist in the transfer of the ammonia molecule from PurQ to PurL. The sequence is that of Phosphoribosylformylglycinamidine synthase subunit PurQ from Corynebacterium efficiens (strain DSM 44549 / YS-314 / AJ 12310 / JCM 11189 / NBRC 100395).